Reading from the N-terminus, the 354-residue chain is Rhodopsin (354 aa).

The Extracellular portion of the chain corresponds to 1–36; the sequence is MNGTEGENFYVPMSNKTGVVRSPFDYPQYYLGEPWM. N-linked (GlcNAc...) asparagine glycosylation is found at Asn-2 and Asn-15. Residues 37–61 traverse the membrane as a helical segment; sequence FSALAAYMFFLILTGLPVNFLTLFV. Residues 62-73 are Cytoplasmic-facing; it reads TIQHKKLRQPLN. The helical transmembrane segment at 74–96 threads the bilayer; the sequence is YILLNLAVSDLFMVFGGFTTTII. At 97-110 the chain is on the extracellular side; the sequence is TSMNGYFIFGPAGC. Cysteines 110 and 187 form a disulfide. The chain crosses the membrane as a helical span at residues 111-133; the sequence is NFEGFFATLGGEVGLWCLVVLAI. Positions 134-136 match the 'Ionic lock' involved in activated form stabilization motif; it reads ERY. The Cytoplasmic portion of the chain corresponds to 134–152; it reads ERYMVVCKPMANFRFGSQH. The helical transmembrane segment at 153 to 173 threads the bilayer; that stretch reads AIIGVVFTWIMALSCAGPPLV. Topologically, residues 174–202 are extracellular; that stretch reads GWSRYIPEGLQCSCGVDYYTMKPEVNNES. Residues 203–224 traverse the membrane as a helical segment; the sequence is FVIYMFVVHFTIPLIVIFFCYG. The Cytoplasmic segment spans residues 225-252; the sequence is RLVCTVKEAAAQQQESESTQRAEREVTR. The chain crosses the membrane as a helical span at residues 253 to 274; sequence MVIIMVVAFLICWVPYASVAFY. Topologically, residues 275–286 are extracellular; that stretch reads IFINQGCDFTPF. The chain crosses the membrane as a helical span at residues 287 to 308; that stretch reads FMTVPAFFAKSSAVYNPLIYIL. Lys-296 carries the post-translational modification N6-(retinylidene)lysine. The Cytoplasmic portion of the chain corresponds to 309–354; that stretch reads MNKQFRNCMITTICLGKNPFEEEESTSASASKTEASSVSSSQVAPA. Cys-322 carries S-palmitoyl cysteine lipidation. The disordered stretch occupies residues 333–354; sequence STSASASKTEASSVSSSQVAPA. A compositionally biased stretch (low complexity) spans 334-354; sequence TSASASKTEASSVSSSQVAPA.

It belongs to the G-protein coupled receptor 1 family. Opsin subfamily. Post-translationally, phosphorylated on some or all of the serine and threonine residues present in the C-terminal region. Contains one covalently linked retinal chromophore.

It localises to the membrane. It is found in the cell projection. Its subcellular location is the cilium. The protein resides in the photoreceptor outer segment. Photoreceptor required for image-forming vision at low light intensity. While most salt water fish species use retinal as chromophore, most freshwater fish use 3-dehydroretinal, or a mixture of retinal and 3-dehydroretinal. Light-induced isomerization of 11-cis to all-trans retinal triggers a conformational change that activates signaling via G-proteins. Subsequent receptor phosphorylation mediates displacement of the bound G-protein alpha subunit by arrestin and terminates signaling. This is Rhodopsin (rho) from Leucoraja erinaceus (Little skate).